The sequence spans 346 residues: Leucine zipper protein 2 (346 aa).

The N-terminal stretch at 1–19 is a signal peptide; sequence MKFSPAHYLLPLLPALVLS. Residues 16–211 are a coiled coil; sequence LVLSTRQDYE…QMKAMKETVQ (196 aa). A glycan (N-linked (GlcNAc...) asparagine) is linked at asparagine 133. Residues 164–192 are leucine-zipper; that stretch reads LRYGKKDLLFKAQQLTDLEQKLAVAKNEL. Positions 225-346 are disordered; it reads ALSLITSNPT…GMAAREEKIL (122 aa). The span at 250–261 shows a compositional bias: low complexity; it reads AAAKSKPQQSAS. A compositionally biased stretch (polar residues) spans 262-283; the sequence is GNNESSQVESTKEGSPSTTACD. A glycan (N-linked (GlcNAc...) asparagine) is linked at asparagine 264. Positions 286–298 are enriched in basic and acidic residues; sequence DEGRTCSIKHKES. N-linked (GlcNAc...) asparagine glycosylation is present at asparagine 302.

Its subcellular location is the secreted. This is Leucine zipper protein 2 (LUZP2) from Pongo abelii (Sumatran orangutan).